The following is a 390-amino-acid chain: S-adenosylmethionine synthase (390 aa).

Glu-12 lines the Mg(2+) pocket. His-18 is an ATP binding site. Glu-46 serves as a coordination point for K(+). Positions 59 and 102 each coordinate L-methionine. Residues 170 to 172 (DGK), 238 to 241 (SGRF), Asp-249, 255 to 256 (RK), Ala-272, Lys-276, and Lys-280 contribute to the ATP site. Asp-249 contributes to the L-methionine binding site. Residue Lys-280 participates in L-methionine binding.

The protein belongs to the AdoMet synthase family. As to quaternary structure, homotetramer. The cofactor is Mn(2+). It depends on Mg(2+) as a cofactor. Co(2+) serves as cofactor. Requires K(+) as cofactor.

The protein localises to the cytoplasm. It catalyses the reaction L-methionine + ATP + H2O = S-adenosyl-L-methionine + phosphate + diphosphate. The protein operates within amino-acid biosynthesis; S-adenosyl-L-methionine biosynthesis; S-adenosyl-L-methionine from L-methionine: step 1/1. In terms of biological role, catalyzes the formation of S-adenosylmethionine from methionine and ATP. The reaction comprises two steps that are both catalyzed by the same enzyme: formation of S-adenosylmethionine (AdoMet) and triphosphate, and subsequent hydrolysis of the triphosphate. The sequence is that of S-adenosylmethionine synthase (METM) from Chlamydomonas reinhardtii (Chlamydomonas smithii).